Consider the following 208-residue polypeptide: Probable GTP-binding protein EngB (208 aa).

An EngB-type G domain is found at 22–195 (GLPEIALAGR…WGALEDIFVE (174 aa)). Residues 30-37 (GRSNVGKS), 57-61 (GKTRT), 75-78 (DLPG), 142-145 (TKSD), and 174-176 (ISS) each bind GTP. Positions 37 and 59 each coordinate Mg(2+).

This sequence belongs to the TRAFAC class TrmE-Era-EngA-EngB-Septin-like GTPase superfamily. EngB GTPase family. It depends on Mg(2+) as a cofactor.

Its function is as follows. Necessary for normal cell division and for the maintenance of normal septation. In Alkaliphilus metalliredigens (strain QYMF), this protein is Probable GTP-binding protein EngB.